The sequence spans 78 residues: uncharacterized protein (78 aa).

Positions 1 to 45 are cleaved as a signal peptide; sequence MPVIAIIAIVIIVIILNKTGVSDSLTALTLATVAALLTGGGAAGA.

It to E.coli YkfL.

This is an uncharacterized protein from Escherichia coli (strain K12).